We begin with the raw amino-acid sequence, 888 residues long: MNSVNSIRSTFLDYFHLNGHKVLSSSPLVPRNDPTLMFTNAGMVQFKNVFTGLEQRPCKQATTAQKCVRVGGKHNDLDNVGYTARHHTFFEMLGNFSFSDYFKEEAIFLSWNLLTKEFCLPKDKLLVTVYHSDDVAAELWRKISNLSDEKIVRIATVDNFWAMGETGPCGPCSEIFYDHGDEIWGGPPGSANEGGDRFIEIWNLVFMQYEQVSKEERVELPHPSIDTGMGLERIAAVLQGVHDNYDIDLFRALIGASQEITGVEATGDFIASHRVISDHLRSCAFLIADGVLPSNEGRGYVLRRIMRRAMRHAHFLGVKEPLMWRLLPVLVREMGQAYPELVRAESLISETLKLEEMRFRKTLERGLGLLNEASSNLKEGDHFNGEIAFKLYDTYGFPLDLTQDALRCRGISVDVDAFDKAMQRQKTEARANWSGSGEAVTETIWFAVRDRVGATEFLGYEIEKAEGIITALICDGKVVDHISSGQKAIIVVNQTPFYGESGGQIGDSGIISSGCFVFEVHDTQKKSNGVFIHIGEVKSGQAKTFECVELTVDVVRRQKIRANHSATHLLHEALRQILGPHVTQKGSLVLPDRLRFDFSHPKSVSSEELKKIEDLANDIVLQNSEVTTHLMALDDAISEGAMALFGEKYGDEVRVVSMGNPLEPEGLKKRWSIELCGGTHVERTGDIGLIHIVSESSVAAGVRRIEALTGTAARLYFNRQDERIREISSLLKTVPADVGERVSNLLHEYNRLSQACIELRKKIILSGNTIKNNQEDITIINGISFMGRVVRNILPRDLKALVDDGKKQIGSGVVAFISVAENGKGSAVVGVTNDLTDKLNAVNLIHILSDVLGGKGGGGRPDMAQSGGPEGDKAVGALAALRASLEKI.

H564, H568, C676, and H680 together coordinate Zn(2+).

It belongs to the class-II aminoacyl-tRNA synthetase family. It depends on Zn(2+) as a cofactor.

Its subcellular location is the cytoplasm. The catalysed reaction is tRNA(Ala) + L-alanine + ATP = L-alanyl-tRNA(Ala) + AMP + diphosphate. Catalyzes the attachment of alanine to tRNA(Ala) in a two-step reaction: alanine is first activated by ATP to form Ala-AMP and then transferred to the acceptor end of tRNA(Ala). Also edits incorrectly charged Ser-tRNA(Ala) and Gly-tRNA(Ala) via its editing domain. The protein is Alanine--tRNA ligase of Bartonella quintana (strain Toulouse) (Rochalimaea quintana).